The following is a 382-amino-acid chain: 1-deoxy-D-xylulose 5-phosphate reductoisomerase (382 aa).

NADPH-binding residues include Thr10, Gly11, Ser12, Ile13, Gly36, and Asn122. Lys123 lines the 1-deoxy-D-xylulose 5-phosphate pocket. Residue Glu124 participates in NADPH binding. Asp148 is a binding site for Mn(2+). Residues Ser149, Glu150, Ser174, and His197 each coordinate 1-deoxy-D-xylulose 5-phosphate. Glu150 contributes to the Mn(2+) binding site. Residue Gly203 coordinates NADPH. 4 residues coordinate 1-deoxy-D-xylulose 5-phosphate: Ser210, Asn215, Lys216, and Glu219. Glu219 contributes to the Mn(2+) binding site.

This sequence belongs to the DXR family. Mg(2+) is required as a cofactor. The cofactor is Mn(2+).

It carries out the reaction 2-C-methyl-D-erythritol 4-phosphate + NADP(+) = 1-deoxy-D-xylulose 5-phosphate + NADPH + H(+). It functions in the pathway isoprenoid biosynthesis; isopentenyl diphosphate biosynthesis via DXP pathway; isopentenyl diphosphate from 1-deoxy-D-xylulose 5-phosphate: step 1/6. Catalyzes the NADPH-dependent rearrangement and reduction of 1-deoxy-D-xylulose-5-phosphate (DXP) to 2-C-methyl-D-erythritol 4-phosphate (MEP). The chain is 1-deoxy-D-xylulose 5-phosphate reductoisomerase from Chlorobium phaeobacteroides (strain BS1).